The following is a 178-amino-acid chain: MKALYLLGLLAFLYSCSSENVYDLQPESSEEENPGTFLEAIQEQSRTCVPRDGDCTENRKACCRSKIFQDRCQCRKVSQDKVACSCKQPYWLMKIEEILGDIPEKPKPVEGKCVKKHHDCSQRKNDCCPGSMENYTCKCYNTLEEGAKESEICGCVSKADHQILAQGFRYVKRLHDLR.

Positions 1 to 18 (MKALYLLGLLAFLYSCSS) are cleaved as a signal peptide. A propeptide spanning residues 19 to 46 (ENVYDLQPESSEEENPGTFLEAIQEQSR) is cleaved from the precursor. A Processing quadruplet motif motif is present at residues 43 to 46 (EQSR). 8 cysteine pairs are disulfide-bonded: Cys48–Cys63, Cys55–Cys72, Cys62–Cys86, Cys74–Cys84, Cys113–Cys128, Cys120–Cys137, Cys127–Cys155, and Cys139–Cys153.

It belongs to the spider toxin CSTX family. Double-CSTX subfamily. In terms of processing, cleavage of the propeptide depends on the processing quadruplet motif (XXXR, with at least one of X being E). As to expression, expressed by the venom gland.

The protein localises to the secreted. Its function is as follows. Spider venom toxin that exhibits cytolytic activity by forming an alpha-helix across the membrane. Lethal to insect larvae. The sequence is that of DELTA-miturgitoxin-Cp3a from Cheiracanthium punctorium (Yellow sac spider).